Here is a 245-residue protein sequence, read N- to C-terminus: 5'-nucleotidase SurE (245 aa).

4 residues coordinate a divalent metal cation: Asp-8, Asp-9, Ser-39, and Asn-91.

The protein belongs to the SurE nucleotidase family. A divalent metal cation serves as cofactor.

Its subcellular location is the cytoplasm. The enzyme catalyses a ribonucleoside 5'-phosphate + H2O = a ribonucleoside + phosphate. In terms of biological role, nucleotidase that shows phosphatase activity on nucleoside 5'-monophosphates. This chain is 5'-nucleotidase SurE, found in Herminiimonas arsenicoxydans.